The primary structure comprises 150 residues: UPF0756 membrane protein ECA1265 (150 aa).

The next 4 helical transmembrane spans lie at Met1 to Ser21, Tyr51 to Gly71, Phe82 to Gly102, and Ala127 to Ile147.

Belongs to the UPF0756 family.

It is found in the cell membrane. This is UPF0756 membrane protein ECA1265 from Pectobacterium atrosepticum (strain SCRI 1043 / ATCC BAA-672) (Erwinia carotovora subsp. atroseptica).